The chain runs to 180 residues: DNA replication regulator protein HobA (180 aa).

The Ca(2+) site is built by Glu-17, Glu-27, Glu-140, Glu-143, and Asn-176.

Forms dimers and homotetramers. Interacts with domains I and II (residues 1-112) of DnaA. In a crystal with domains I and II of DnaA HobA forms tetramers with DnaA fragments bound at the dimer interface of the tetramer. Ca(2+) is required as a cofactor.

Its function is as follows. Required for DNA replication initiation. Increases binding of DnaA to oriC region. The protein is DNA replication regulator protein HobA of Helicobacter pylori (strain ATCC 700392 / 26695) (Campylobacter pylori).